The sequence spans 697 residues: MSSKHSDPLERFYKQFQAFVQNNPNVISAARAAAQIPESAKAVVVLSPYSLQHVFPREWVTKSYRKTIVERPERLLASSMGISAAITMYPSLFTLKSSHQRKGSLMAPHVLKVHGSSWPAELIELCQMADAKLLKGEIEVPDTWNSGDIYLSSKTIKALQGTIGAIETGVDSIFKGPSAEHISNRAFVAIRPPGHHCHYGTPSGFCLLNNAHVAIEYAYDTYNVTHVVVLDFDLHHGDGTQDICWKRAGFKPEEEPEDSSYDDFGKKFAEFPKVGYFSMHDINSFPTESGFATKENIKNASTCIMNSHDLNIWNIHLSKWTTEEEFNVLYRTKYRTLFAKADEFFRSAKLEMNQQGRPFKGLVVISAGFDASEFEQTSMQRHSVNVPTSFYTTFTKDALKLAQMHCHGKVLSLMEGGYSDKAICSGVFAHLIGLQNQDWVKEWGSEQVVKEIVRGCKPAWKPYKTKRAKDVIRIWAEEVIRLGRAMIPEFDDIIFKDAVNSAPSNSLLKATVEPASTSTIAQRIIRSHRSNASPEKELHENKPRSTEKQEQREIRSDTKVKQLSSNNRAAETQIPFLQQEFSSEDEDEEYVYDEELNKTFNRTVEDITIDDISRHLETLEIEKKGDEDSDHELKEKNWKNSHQRRLQGNGMYKIPSNTKPHRIRQPQNANTPTYDDSDISMISHVSRKHTTRSGGRW.

Residues 40–440 (AKAVVVLSPY…LIGLQNQDWV (401 aa)) form a histone deacetylase region. His196 is an active-site residue. The disordered stretch occupies residues 525-573 (IRSHRSNASPEKELHENKPRSTEKQEQREIRSDTKVKQLSSNNRAAETQ). The span at 534-560 (PEKELHENKPRSTEKQEQREIRSDTKV) shows a compositional bias: basic and acidic residues. A compositionally biased stretch (polar residues) spans 561 to 573 (KQLSSNNRAAETQ). Residues Ser582, Ser583, Ser613, and Ser629 each carry the phosphoserine modification. A compositionally biased stretch (basic and acidic residues) spans 625–638 (GDEDSDHELKEKNW). The disordered stretch occupies residues 625 to 697 (GDEDSDHELK…KHTTRSGGRW (73 aa)). Residues 665–674 (QPQNANTPTY) are compositionally biased toward polar residues.

This sequence belongs to the histone deacetylase family. HD type 1 subfamily. In terms of assembly, homodimer.

The protein localises to the nucleus. The enzyme catalyses N(6)-acetyl-L-lysyl-[histone] + H2O = L-lysyl-[histone] + acetate. Functionally, responsible for the deacetylation of lysine residues on the N-terminal part of the core histones (H2A, H2B, H3 and H4). Histone deacetylation gives a tag for epigenetic repression and plays an important role in transcriptional regulation, cell cycle progression and developmental events. Histone deacetylases act via the formation of large multiprotein complexes. The protein is Histone deacetylase HOS3 (HOS3) of Saccharomyces cerevisiae (strain ATCC 204508 / S288c) (Baker's yeast).